A 398-amino-acid polypeptide reads, in one-letter code: Acetate kinase (398 aa).

A Mg(2+)-binding site is contributed by N7. K14 is an ATP binding site. R92 lines the substrate pocket. Catalysis depends on D149, which acts as the Proton donor/acceptor. Residues 208 to 212, 283 to 285, and 331 to 335 contribute to the ATP site; these read HLGNG, DCR, and GIGEN. E385 lines the Mg(2+) pocket.

The protein belongs to the acetokinase family. As to quaternary structure, homodimer. Requires Mg(2+) as cofactor. It depends on Mn(2+) as a cofactor.

Its subcellular location is the cytoplasm. It carries out the reaction acetate + ATP = acetyl phosphate + ADP. The protein operates within metabolic intermediate biosynthesis; acetyl-CoA biosynthesis; acetyl-CoA from acetate: step 1/2. Catalyzes the formation of acetyl phosphate from acetate and ATP. Can also catalyze the reverse reaction. This chain is Acetate kinase, found in Fusobacterium nucleatum subsp. nucleatum (strain ATCC 25586 / DSM 15643 / BCRC 10681 / CIP 101130 / JCM 8532 / KCTC 2640 / LMG 13131 / VPI 4355).